Reading from the N-terminus, the 167-residue chain is Protein-lysine myristoyltransferase RtxC (167 aa).

Active-site residues include His-20 and Asp-89.

This sequence belongs to the RTX toxin acyltransferase family.

The protein localises to the cytoplasm. The enzyme catalyses tetradecanoyl-[ACP] + L-lysyl-[protein] = N(6)-tetradecanoyl-L-lysyl-[protein] + holo-[ACP] + H(+). Its function is as follows. Protein-lysine myristoyltransferase that catalyzes myristoylation of the protoxin (RtxA) at two internal lysine residues, thereby converting it to the active toxin. In Kingella kingae, this protein is Protein-lysine myristoyltransferase RtxC.